Here is a 514-residue protein sequence, read N- to C-terminus: Ubiquitin carboxyl-terminal hydrolase 22 (514 aa).

Residues 10-127 (PGCAHLGSFK…KEEQRKAWKM (118 aa)) form a UBP-type zinc finger. Zn(2+) is bound by residues Cys12, His14, Cys52, Cys55, Cys65, Cys68, Cys73, His78, His82, His88, Cys101, and Cys104. An N6-acetyllysine modification is found at Lys118. Residue Thr136 is modified to Phosphothreonine. In terms of domain architecture, USP spans 165 to 509 (RGLINLGNTC…EGYLLFYHKQ (345 aa)). Residue Cys174 is the Nucleophile of the active site. Ser226 bears the Phosphoserine mark. The active-site Proton acceptor is His468.

The protein belongs to the peptidase C19 family. UBP8 subfamily. Component of some SAGA transcription coactivator-HAT complexes, at least composed of ATXN7, ATXN7L3, ENY2, GCN5L2, SUPT3H, TAF10, TRRAP and USP22. Within the SAGA complex, ATXN7L3, ENY2 and USP22 form a subcomplex required for histone deubiquitination. Interacts directly with ATXN7L3; leading to its recruitment to the SAGA complex. Interacts with ATXN7L3 and weakly with ATXN7L3B. Interacts with MED1. In terms of processing, phosphorylated in G2/M phase, but not in G1 phase by CDK1. Post-translationally, ubiquitinated and subsequently degraded in a CDC20-dependent manner.

The protein localises to the nucleus. It localises to the cytoplasm. It catalyses the reaction Thiol-dependent hydrolysis of ester, thioester, amide, peptide and isopeptide bonds formed by the C-terminal Gly of ubiquitin (a 76-residue protein attached to proteins as an intracellular targeting signal).. Deubiquitinase that plays a role in several cellular processes including transcriptional regulation, cell cycle progression or innate immunity. As part of the transcription regulatory histone acetylation (HAT) complex SAGA, catalyzes the deubiquitination of both histones H2A and H2B, thereby acting as a transcriptional coactivator. Recruited to specific gene promoters by activators such as MYC, where it is required for transcription. Facilitates cell-cycle progression by stabilizing CCNB1 and antagonizing its proteasome-mediated degradation in a cell cycle-specific manner. Modulates cell cycle progression and apoptosis also by antagonizing TP53 transcriptional activation through deacetylase SIRT1 stabilization. Plays multiple roles in immunity and inflammation. Participates in antiviral response by deubiquitinating the importin KPNA2, leading to IRF3 nuclear translocation and subsequent type I interferon production. Acts as a central regulator of type III IFN signaling by negatively regulating STING1 activation and ubiquitination. Inhibits NLRP3 inflammasome activation by promoting NLRP3 degradation through ATG5-dependent autophagy. Deubiquitinates CD274 to induce its stabilization and thereby participates in maintenance of immune tolerance to self. Controls necroptotic cell death by regulating RIPK3 phosphorylation and ubiquitination. During bacterial infection, promotes pro-inflammatory response by targeting TRAF6 and removing its 'Lys-48'-linked polyubiquitination. The polypeptide is Ubiquitin carboxyl-terminal hydrolase 22 (USP22) (Bos taurus (Bovine)).